We begin with the raw amino-acid sequence, 125 residues long: UPF0231 protein APP7_1023 (125 aa).

It belongs to the UPF0231 family.

In Actinobacillus pleuropneumoniae serotype 7 (strain AP76), this protein is UPF0231 protein APP7_1023.